Reading from the N-terminus, the 389-residue chain is Phosphoglycerate kinase (389 aa).

Residues 21 to 23 (DLN), Arg36, 59 to 62 (HLGR), Arg112, and Arg145 each bind substrate. ATP is bound by residues Lys196, Glu318, and 344 to 347 (GGDS).

It belongs to the phosphoglycerate kinase family. In terms of assembly, monomer.

It localises to the cytoplasm. The enzyme catalyses (2R)-3-phosphoglycerate + ATP = (2R)-3-phospho-glyceroyl phosphate + ADP. It participates in carbohydrate degradation; glycolysis; pyruvate from D-glyceraldehyde 3-phosphate: step 2/5. This is Phosphoglycerate kinase from Desulfovibrio desulfuricans (strain ATCC 27774 / DSM 6949 / MB).